The chain runs to 260 residues: Type III pantothenate kinase (260 aa).

6-13 (DSGNTNIV) provides a ligand contact to ATP. 108-111 (GADR) serves as a coordination point for substrate. Asp-110 acts as the Proton acceptor in catalysis. Asp-130 is a binding site for K(+). Residue Thr-133 coordinates ATP. Residue Thr-185 participates in substrate binding.

This sequence belongs to the type III pantothenate kinase family. Homodimer. The cofactor is NH4(+). Requires K(+) as cofactor.

The protein localises to the cytoplasm. The catalysed reaction is (R)-pantothenate + ATP = (R)-4'-phosphopantothenate + ADP + H(+). It participates in cofactor biosynthesis; coenzyme A biosynthesis; CoA from (R)-pantothenate: step 1/5. Its function is as follows. Catalyzes the phosphorylation of pantothenate (Pan), the first step in CoA biosynthesis. The chain is Type III pantothenate kinase from Paramagnetospirillum magneticum (strain ATCC 700264 / AMB-1) (Magnetospirillum magneticum).